Consider the following 97-residue polypeptide: Glutamyl-tRNA(Gln) amidotransferase subunit C (97 aa).

The protein belongs to the GatC family. In terms of assembly, heterotrimer of A, B and C subunits.

It carries out the reaction L-glutamyl-tRNA(Gln) + L-glutamine + ATP + H2O = L-glutaminyl-tRNA(Gln) + L-glutamate + ADP + phosphate + H(+). It catalyses the reaction L-aspartyl-tRNA(Asn) + L-glutamine + ATP + H2O = L-asparaginyl-tRNA(Asn) + L-glutamate + ADP + phosphate + 2 H(+). Functionally, allows the formation of correctly charged Asn-tRNA(Asn) or Gln-tRNA(Gln) through the transamidation of misacylated Asp-tRNA(Asn) or Glu-tRNA(Gln) in organisms which lack either or both of asparaginyl-tRNA or glutaminyl-tRNA synthetases. The reaction takes place in the presence of glutamine and ATP through an activated phospho-Asp-tRNA(Asn) or phospho-Glu-tRNA(Gln). This Saccharolobus solfataricus (strain ATCC 35092 / DSM 1617 / JCM 11322 / P2) (Sulfolobus solfataricus) protein is Glutamyl-tRNA(Gln) amidotransferase subunit C.